Consider the following 80-residue polypeptide: uncharacterized protein (80 aa).

The protein belongs to the 2-oxoacid dehydrogenase family.

This is an uncharacterized protein from Mycobacterium tuberculosis (strain CDC 1551 / Oshkosh).